A 244-amino-acid chain; its full sequence is Ureidoacrylate amidohydrolase RutB (244 aa).

Asp-38 functions as the Proton acceptor in the catalytic mechanism. Lys-147 is a catalytic residue. Residue Cys-180 is the Nucleophile of the active site.

The protein belongs to the isochorismatase family. RutB subfamily.

It carries out the reaction (Z)-3-ureidoacrylate + H2O + H(+) = (Z)-3-aminoacrylate + NH4(+) + CO2. The catalysed reaction is (Z)-3-ureidoacrylate + H2O = (Z)-3-aminoacrylate + carbamate + H(+). It catalyses the reaction (Z)-2-methylureidoacrylate + H2O + H(+) = (Z)-2-methylaminoacrylate + NH4(+) + CO2. Hydrolyzes ureidoacrylate to form aminoacrylate and carbamate. The carbamate hydrolyzes spontaneously, thereby releasing one of the nitrogen atoms of the pyrimidine ring as ammonia and one of its carbon atoms as CO2. This is Ureidoacrylate amidohydrolase RutB from Shigella sonnei (strain Ss046).